The sequence spans 315 residues: tRNA wybutosine-synthesizing protein 5 (315 aa).

Residues Asp102–Lys267 enclose the JmjC domain. 2-oxoglutarate is bound at residue Tyr106. The Fe cation site is built by His160 and Asp162. Residues Asn166 and Lys175 each coordinate 2-oxoglutarate. His235 serves as a coordination point for Fe cation.

The protein belongs to the TYW5 family. Homodimer. The cofactor is Fe(2+).

The catalysed reaction is 7-[(3S)-3-amino-3-carboxypropyl]wyosine(37) in tRNA(Phe) + 2-oxoglutarate + O2 = 7-(2-hydroxy-3-amino-3-carboxypropyl)wyosine(37) in tRNA(Phe) + succinate + CO2. Its pathway is tRNA modification; wybutosine-tRNA(Phe) biosynthesis. Its function is as follows. tRNA hydroxylase that acts as a component of the wybutosine biosynthesis pathway. Wybutosine is a hyper modified guanosine with a tricyclic base found at the 3'-position adjacent to the anticodon of eukaryotic phenylalanine tRNA. Catalyzes the hydroxylation of 7-(a-amino-a-carboxypropyl)wyosine (yW-72) into undermodified hydroxywybutosine (OHyW*). OHyW* being further transformed into hydroxywybutosine (OHyW) by LCMT2/TYW4. OHyW is a derivative of wybutosine found in higher eukaryotes. The chain is tRNA wybutosine-synthesizing protein 5 (TYW5) from Homo sapiens (Human).